The chain runs to 598 residues: uncharacterized protein (598 aa).

Mn(2+) contacts are provided by Asp397, Asp408, Glu506, and Glu520.

It belongs to the peptidase M24B family. It depends on Mn(2+) as a cofactor.

This is an uncharacterized protein from Schizosaccharomyces pombe (strain 972 / ATCC 24843) (Fission yeast).